We begin with the raw amino-acid sequence, 449 residues long: MFNINPYKSKTTKSSSSSSASPKSSKISNVSGSGSSSSSSSSSSSSSKDKDKDKRKKSFLKDDSVPSLSSKTENSLSLTSLSEITQSMTNTQTQTATDASMTAEDVSEIGEDYDPFLSILEEPGVDGATIEKETTEELQEMLAVLKGVQNECNVLLLGRTGVGKSSTLNTVFGIDIPVHSSESCTQDPFTYSRVVNGFKLNIIDTPGFLDSQGELVDSNNMIKIQRYLSGKTIHCVLFVEKFTETRFDGAHQLVINQFTEKLGPQLWRNAAVVLTYANSVLPDSCYDGFDEEDDVGPWKKHYEARALQFRKFFAGILAQLPQDDYPPKHIPVYAMENSRRCKRNEQGQRVLIDGTPCLHLLISGLLKMVDPKTAFLFMGHLRAKNKPGRGHRGDQNDRELSIMDNITEILKLFIVPPFDQLGKGTVAKILENWGKKLDKYGNLPNLLKI.

The interval 1-77 is disordered; the sequence is MFNINPYKSK…LSSKTENSLS (77 aa). 2 stretches are compositionally biased toward low complexity: residues 8 to 46 and 67 to 77; these read KSKTTKSSSSSSASPKSSKISNVSGSGSSSSSSSSSSSS and SLSSKTENSLS. The AIG1-type G domain occupies 149–386; it reads QNECNVLLLG…FMGHLRAKNK (238 aa). Residues 158–165 form a G1 region; it reads GRTGVGKS. A GTP-binding site is contributed by 158 to 165; sequence GRTGVGKS. The interval 183-187 is G2; that stretch reads SCTQD. The segment at 204–207 is G3; the sequence is DTPG. The segment at 275–278 is G4; that stretch reads TYAN. Positions 336-338 are G5; the sequence is ENS.

The protein belongs to the TRAFAC class TrmE-Era-EngA-EngB-Septin-like GTPase superfamily. AIG1/Toc34/Toc159-like paraseptin GTPase family. IAN subfamily.

The chain is GTP-binding protein A (gtpA) from Dictyostelium discoideum (Social amoeba).